A 234-amino-acid polypeptide reads, in one-letter code: Ribonuclease 3 (234 aa).

The 124-residue stretch at 13–136 (YITLEKALGY…LMAGVYLEAG (124 aa)) folds into the RNase III domain. Residue E49 participates in Mg(2+) binding. D53 is a catalytic residue. S122 and E125 together coordinate Mg(2+). E125 is an active-site residue. The region spanning 163–232 (DYKTALQELT…AYQALQKLKG (70 aa)) is the DRBM domain.

It belongs to the ribonuclease III family. As to quaternary structure, homodimer. The cofactor is Mg(2+).

It localises to the cytoplasm. It catalyses the reaction Endonucleolytic cleavage to 5'-phosphomonoester.. Functionally, digests double-stranded RNA. Involved in the processing of primary rRNA transcript to yield the immediate precursors to the large and small rRNAs (23S and 16S). Processes some mRNAs, and tRNAs when they are encoded in the rRNA operon. Processes pre-crRNA and tracrRNA of type II CRISPR loci if present in the organism. The polypeptide is Ribonuclease 3 (Helicobacter acinonychis (strain Sheeba)).